The following is a 130-amino-acid chain: Phosphomevalonate dehydratase small subunit (130 aa).

Ser62 acts as the Proton acceptor in catalysis.

The protein belongs to the AcnX type II small subunit family. As to quaternary structure, heterodimer composed of a large subunit (PMDh-L) and a small subunit (PMDh-S).

It carries out the reaction (R)-5-phosphomevalonate = (2E)-3-methyl-5-phosphooxypent-2-enoate + H2O. It participates in isoprenoid biosynthesis; isopentenyl diphosphate biosynthesis via mevalonate pathway. Its function is as follows. Component of a hydro-lyase that catalyzes the dehydration of mevalonate 5-phosphate (MVA5P) to form trans-anhydromevalonate 5-phosphate (tAHMP). Involved in the archaeal mevalonate (MVA) pathway, which provides fundamental precursors for isoprenoid biosynthesis, such as isopentenyl diphosphate (IPP) and dimethylallyl diphosphate (DMAPP). The polypeptide is Phosphomevalonate dehydratase small subunit (Pyrococcus abyssi (strain GE5 / Orsay)).